The chain runs to 404 residues: Glutamate-pyruvate aminotransferase AlaA (404 aa).

L-alanine-binding residues include glycine 41 and asparagine 179. Residue lysine 240 is modified to N6-(pyridoxal phosphate)lysine. Residue arginine 378 coordinates L-alanine.

It belongs to the class-I pyridoxal-phosphate-dependent aminotransferase family. In terms of assembly, homodimer. Pyridoxal 5'-phosphate is required as a cofactor.

The catalysed reaction is L-alanine + 2-oxoglutarate = pyruvate + L-glutamate. Its pathway is amino-acid biosynthesis; L-alanine biosynthesis. Its function is as follows. Involved in the biosynthesis of alanine. Catalyzes the transamination of pyruvate by glutamate, leading to the formation of L-alanine and 2-oxoglutarate. Is also able to catalyze the reverse reaction. The chain is Glutamate-pyruvate aminotransferase AlaA (alaA) from Haemophilus influenzae (strain ATCC 51907 / DSM 11121 / KW20 / Rd).